Consider the following 509-residue polypeptide: ATP synthase subunit alpha (509 aa).

Residue 169–176 (GDRQTGKT) coordinates ATP.

This sequence belongs to the ATPase alpha/beta chains family. In terms of assembly, F-type ATPases have 2 components, CF(1) - the catalytic core - and CF(0) - the membrane proton channel. CF(1) has five subunits: alpha(3), beta(3), gamma(1), delta(1), epsilon(1). CF(0) has three main subunits: a(1), b(2) and c(9-12). The alpha and beta chains form an alternating ring which encloses part of the gamma chain. CF(1) is attached to CF(0) by a central stalk formed by the gamma and epsilon chains, while a peripheral stalk is formed by the delta and b chains.

Its subcellular location is the cell inner membrane. The catalysed reaction is ATP + H2O + 4 H(+)(in) = ADP + phosphate + 5 H(+)(out). In terms of biological role, produces ATP from ADP in the presence of a proton gradient across the membrane. The alpha chain is a regulatory subunit. This Rhizobium meliloti (strain 1021) (Ensifer meliloti) protein is ATP synthase subunit alpha.